We begin with the raw amino-acid sequence, 79 residues long: UPF0401 protein YkfF (79 aa).

Belongs to the UPF0401 family.

The polypeptide is UPF0401 protein YkfF (ykfF) (Escherichia coli (strain K12)).